A 1079-amino-acid chain; its full sequence is Translation initiation factor IF-2 (1079 aa).

3 stretches are compositionally biased toward basic and acidic residues: residues Val52–Asn65, Arg75–Glu90, and Ala102–Gln134. Residues Val52–Ala488 form a disordered region. Low complexity predominate over residues Ala150 to Thr184. A compositionally biased stretch (basic and acidic residues) spans Val185 to Ala194. Over residues Ala276–Gln291 the composition is skewed to low complexity. Over residues Gly306–Gly327 the composition is skewed to basic and acidic residues. Composition is skewed to low complexity over residues Glu348–Pro370 and Pro380–Pro398. The span at Pro419–Gly429 shows a compositional bias: gly residues. The segment covering Pro461 to Arg471 has biased composition (basic and acidic residues). Positions Pro473 to Lys482 are enriched in basic residues. The tr-type G domain occupies Thr578–Glu745. The tract at residues Gly587 to Thr594 is G1. Gly587 to Thr594 lines the GTP pocket. The segment at Gly612–His616 is G2. The G3 stretch occupies residues Asp633 to Gly636. Residues Asp633–His637 and Asn687–Asp690 contribute to the GTP site. The G4 stretch occupies residues Asn687–Asp690. A G5 region spans residues Ser723–Lys725.

Belongs to the TRAFAC class translation factor GTPase superfamily. Classic translation factor GTPase family. IF-2 subfamily.

The protein localises to the cytoplasm. Its function is as follows. One of the essential components for the initiation of protein synthesis. Protects formylmethionyl-tRNA from spontaneous hydrolysis and promotes its binding to the 30S ribosomal subunits. Also involved in the hydrolysis of GTP during the formation of the 70S ribosomal complex. In Nitratidesulfovibrio vulgaris (strain ATCC 29579 / DSM 644 / CCUG 34227 / NCIMB 8303 / VKM B-1760 / Hildenborough) (Desulfovibrio vulgaris), this protein is Translation initiation factor IF-2.